We begin with the raw amino-acid sequence, 119 residues long: uncharacterized protein (119 aa).

The ABC transmembrane type-1 domain maps to 1-112 (MVFNMRSTRG…FISSCLLLVL (112 aa)). A run of 2 helical transmembrane segments spans residues 51 to 73 (VLAW…ATRF) and 91 to 111 (FEIA…LLLV).

Belongs to the binding-protein-dependent transport system permease family. CysTW subfamily.

The protein resides in the cell membrane. This is an uncharacterized protein from Haemophilus influenzae (strain ATCC 51907 / DSM 11121 / KW20 / Rd).